The sequence spans 282 residues: Phosphate import ATP-binding protein PstB (282 aa).

The disordered stretch occupies residues 1–33; sequence MNMAETQLNPIARPTAPAGFDPAQSGQSQAPSR. The ABC transporter domain maps to 36-277; sequence IEINDLNFFY…PVRKETEDYI (242 aa). 68–75 provides a ligand contact to ATP; the sequence is GPSGCGKS.

The protein belongs to the ABC transporter superfamily. Phosphate importer (TC 3.A.1.7) family. In terms of assembly, the complex is composed of two ATP-binding proteins (PstB), two transmembrane proteins (PstC and PstA) and a solute-binding protein (PstS).

It localises to the cell inner membrane. The catalysed reaction is phosphate(out) + ATP + H2O = ADP + 2 phosphate(in) + H(+). Functionally, part of the ABC transporter complex PstSACB involved in phosphate import. Responsible for energy coupling to the transport system. The chain is Phosphate import ATP-binding protein PstB from Paraburkholderia xenovorans (strain LB400).